Consider the following 710-residue polypeptide: Lactoperoxidase (710 aa).

The first 23 residues, 1–23 (MKVLLHLPALLASLTLLQTAASA), serve as a signal peptide directing secretion. Positions 24–80 (SDDPTAETDIIHDTVEEVKVWVNKAFLDSRDRLKMAMTTKIHSTRHLSDYLKHAKGR) are excised as a propeptide. Cysteine 130 and cysteine 143 are joined by a disulfide. A heme b-binding site is contributed by aspartate 223. Histidine 224 acts as the Proton acceptor in catalysis. Aspartate 225 contributes to the Ca(2+) binding site. 2 cysteine pairs are disulfide-bonded: cysteine 244–cysteine 254 and cysteine 248–cysteine 272. Threonine 299, phenylalanine 301, aspartate 303, and serine 305 together coordinate Ca(2+). Serine 313 carries the phosphoserine modification. Cysteine 352 and cysteine 363 are joined by a disulfide. 2 residues coordinate heme b: glutamate 373 and histidine 466. Residue tyrosine 480 is modified to 3'-nitrotyrosine. 2 disulfide bridges follow: cysteine 571-cysteine 628 and cysteine 669-cysteine 694.

Belongs to the peroxidase family. Ca(2+) is required as a cofactor. The cofactor is heme b. Expressed in the colon, including colonocytes and mucin-containing goblet cells. Not detected in the ileum.

Its subcellular location is the secreted. It localises to the cytoplasm. The catalysed reaction is 2 a phenolic donor + H2O2 = 2 a phenolic radical donor + 2 H2O. It carries out the reaction thiocyanate + H2O2 + H(+) = hypothiocyanous acid + H2O. It catalyses the reaction iodide + H2O2 = hypoiodite + H2O. Heme-containing oxidoreductase which catalyzes the conversion of thiocyanate (SCN(-)) into antimicrobial agent hypothiocyanous acid (OSCN(-)) in the presence of hydrogen peroxide (H2O2). Also involved in the conversion of iodide (I(-)) into hypoiodite (IO(-)) in the presence of H2O2. Responsible for the inactivation of a wide range of micro-organisms and hence, important component of defense mechanism. May be implicated in airway host defense against infection. May contribute to maintaining an appropriate H2O2 cellular level, therefore protecting cells from H2O2-caused injuries and inflammation. The protein is Lactoperoxidase of Mus musculus (Mouse).